The sequence spans 348 residues: VIP36-like protein (348 aa).

Residues 1–44 form the signal peptide; it reads MAATLGPLGSWQQWRRCLSARDGSRMLLLLLLLGSGQGPQQVGA. The Lumenal portion of the chain corresponds to 45-313; it reads GQTFEYLKRE…APLPPLSGLA (269 aa). Residues 49 to 274 form the L-type lectin-like domain; the sequence is EYLKREHSLS…DVISLKLFEL (226 aa). A carbohydrate contacts are provided by Ser-93 and Asp-128. Asp-159, Tyr-161, and Asn-163 together coordinate Ca(2+). Residue 161–163 participates in a carbohydrate binding; that stretch reads YPN. An N-linked (GlcNAc...) (high mannose) asparagine glycan is attached at Asn-181. His-188 contributes to the a carbohydrate binding site. Asp-191 is a Ca(2+) binding site. Residues Cys-200 and Cys-237 are joined by a disulfide bond. An a carbohydrate-binding site is contributed by 258–260; that stretch reads GDL. The chain crosses the membrane as a helical span at residues 314 to 336; the sequence is LFLIVFFSLVFSVFAIVIGIILY. At 337–348 the chain is on the cytoplasmic side; the sequence is NKWQEQSRKRFY. Positions 344–346 match the Endoplasmic reticulum retention signal motif; it reads RKR.

As to expression, expressed in numerous tissues. Highest expression in skeletal muscle and kidney, intermediate levels in heart, liver and placenta, low levels in brain, thymus, spleen, small intestine and lung.

It is found in the endoplasmic reticulum membrane. It localises to the golgi apparatus membrane. Its function is as follows. May be involved in the regulation of export from the endoplasmic reticulum of a subset of glycoproteins. May function as a regulator of ERGIC-53. In Homo sapiens (Human), this protein is VIP36-like protein (LMAN2L).